Reading from the N-terminus, the 248-residue chain is tRNA (guanine-N(1)-)-methyltransferase (248 aa).

S-adenosyl-L-methionine is bound by residues Gly-116 and 135-140; that span reads IGDFVL.

Belongs to the RNA methyltransferase TrmD family. Homodimer.

It localises to the cytoplasm. It catalyses the reaction guanosine(37) in tRNA + S-adenosyl-L-methionine = N(1)-methylguanosine(37) in tRNA + S-adenosyl-L-homocysteine + H(+). Functionally, specifically methylates guanosine-37 in various tRNAs. The sequence is that of tRNA (guanine-N(1)-)-methyltransferase from Anaeromyxobacter sp. (strain Fw109-5).